Reading from the N-terminus, the 258-residue chain is Methionine aminopeptidase (258 aa).

Residue His-84 participates in substrate binding. Residues Asp-102, Asp-113, and His-176 each contribute to the a divalent metal cation site. Residue His-183 participates in substrate binding. A divalent metal cation contacts are provided by Glu-211 and Glu-242.

The protein belongs to the peptidase M24A family. Methionine aminopeptidase type 1 subfamily. In terms of assembly, monomer. The cofactor is Co(2+). Requires Zn(2+) as cofactor. Mn(2+) serves as cofactor. Fe(2+) is required as a cofactor.

It carries out the reaction Release of N-terminal amino acids, preferentially methionine, from peptides and arylamides.. Removes the N-terminal methionine from nascent proteins. The N-terminal methionine is often cleaved when the second residue in the primary sequence is small and uncharged (Met-Ala-, Cys, Gly, Pro, Ser, Thr, or Val). Requires deformylation of the N(alpha)-formylated initiator methionine before it can be hydrolyzed. The chain is Methionine aminopeptidase from Aquifex aeolicus (strain VF5).